A 342-amino-acid chain; its full sequence is UDP-3-O-acylglucosamine N-acyltransferase (342 aa).

His-238 functions as the Proton acceptor in the catalytic mechanism.

It belongs to the transferase hexapeptide repeat family. LpxD subfamily. Homotrimer.

The catalysed reaction is a UDP-3-O-[(3R)-3-hydroxyacyl]-alpha-D-glucosamine + a (3R)-hydroxyacyl-[ACP] = a UDP-2-N,3-O-bis[(3R)-3-hydroxyacyl]-alpha-D-glucosamine + holo-[ACP] + H(+). Its pathway is bacterial outer membrane biogenesis; LPS lipid A biosynthesis. Catalyzes the N-acylation of UDP-3-O-acylglucosamine using 3-hydroxyacyl-ACP as the acyl donor. Is involved in the biosynthesis of lipid A, a phosphorylated glycolipid that anchors the lipopolysaccharide to the outer membrane of the cell. The polypeptide is UDP-3-O-acylglucosamine N-acyltransferase (Tolumonas auensis (strain DSM 9187 / NBRC 110442 / TA 4)).